The chain runs to 185 residues: Ribosome-recycling factor (185 aa).

It belongs to the RRF family.

Its subcellular location is the cytoplasm. Responsible for the release of ribosomes from messenger RNA at the termination of protein biosynthesis. May increase the efficiency of translation by recycling ribosomes from one round of translation to another. This Thermobifida fusca (strain YX) protein is Ribosome-recycling factor.